The following is an 864-amino-acid chain: Putative Gly-rich membrane protein Bcell_0380 (864 aa).

Residues 7-27 form a helical membrane-spanning segment; the sequence is ITFLAAFICIIFVIYAIYHSV. The segment at 372 to 399 is disordered; that stretch reads TVENSFYDEDTTGQSDTGKGTPMSTADM. The segment covering 383–395 has biased composition (polar residues); sequence TGQSDTGKGTPMS.

The protein resides in the cell membrane. This chain is Putative Gly-rich membrane protein Bcell_0380, found in Evansella cellulosilytica (strain ATCC 21833 / DSM 2522 / FERM P-1141 / JCM 9156 / N-4) (Bacillus cellulosilyticus).